The sequence spans 390 residues: DNA primase small subunit PriS (390 aa).

Catalysis depends on residues Asp-98, Asp-100, and Asp-296.

The protein belongs to the eukaryotic-type primase small subunit family. As to quaternary structure, heterodimer of a small subunit (PriS) and a large subunit (PriL). Mg(2+) is required as a cofactor. The cofactor is Mn(2+).

In terms of biological role, catalytic subunit of DNA primase, an RNA polymerase that catalyzes the synthesis of short RNA molecules used as primers for DNA polymerase during DNA replication. The small subunit contains the primase catalytic core and has DNA synthesis activity on its own. Binding to the large subunit stabilizes and modulates the activity, increasing the rate of DNA synthesis while decreasing the length of the DNA fragments, and conferring RNA synthesis capability. The DNA polymerase activity may enable DNA primase to also catalyze primer extension after primer synthesis. May also play a role in DNA repair. This chain is DNA primase small subunit PriS, found in Methanococcoides burtonii (strain DSM 6242 / NBRC 107633 / OCM 468 / ACE-M).